We begin with the raw amino-acid sequence, 573 residues long: Poly(ribitol-phosphate) beta-N-acetylglucosaminyltransferase TarS (573 aa).

Residues proline 9, aspartate 41, asparagine 68, arginine 76, 92–94 (DSD), arginine 127, and glutamate 178 each bind UDP-N-acetyl-alpha-D-glucosamine. Aspartate 94 lines the Mn(2+) pocket. The Proton acceptor role is filled by aspartate 179. UDP-N-acetyl-alpha-D-glucosamine-binding positions include arginine 207 and 211–213 (HMS).

This sequence belongs to the glycosyltransferase 2 family. As to quaternary structure, homotrimer. The cofactor is Mn(2+).

It catalyses the reaction 4-O-[(D-ribitylphospho)(n)-di{(2R)-glycerylphospho}]-N-acetyl-beta-D-mannosaminyl-(1-&gt;4)-N-acetyl-alpha-D-glucosaminyl di-trans,octa-cis-undecaprenyl diphosphate + n UDP-N-acetyl-alpha-D-glucosamine = 4-O-([2-N-acetyl-beta-D-glucosaminyl-1-D-ribitylphospho](n)-di{[2R]-1-glycerylphospho})-N-acetyl-beta-D-mannosaminyl-(1-&gt;4)-N-acetyl-alpha-D-glucosaminyl di-trans,octa-cis-undecaprenyl diphosphate + n UDP + n H(+). Its pathway is cell wall biogenesis; poly(ribitol phosphate) teichoic acid biosynthesis. Its function is as follows. Attaches beta-O-GlcNAc (beta-O-N-acetyl-D-glucosamine) residues to the C4 position of poly(RboP)-wall teichoic acids (WTAs). Prefers UDP-GlcNAc as a donor substrate and is specific for poly(ribitol phosphate) WTAs. Can also use UDP-Glc and UDP-GalNAc, but not UDP-galactose or UDP-glucuronic acid. Mediates beta-lactam resistance in methicillin resistant Staphylococcus aureus (MRSA) strains. This chain is Poly(ribitol-phosphate) beta-N-acetylglucosaminyltransferase TarS, found in Staphylococcus aureus (strain MW2).